Consider the following 103-residue polypeptide: MVKVIDIGRVVVKVLGREAGRKAVVVDIVDENYVVITGPKQLTGVRRRRVNINHIEPTDKKIDIKRGASDEEVLKAVEAAGLVEYMREKVKPKFFGITSAEVK.

It belongs to the eukaryotic ribosomal protein eL14 family.

The chain is Large ribosomal subunit protein eL14 from Pyrobaculum islandicum (strain DSM 4184 / JCM 9189 / GEO3).